We begin with the raw amino-acid sequence, 441 residues long: Tubulin alpha chain (441 aa).

GTP is bound by residues Gln-11, Glu-68, Ser-137, Gly-141, Thr-142, Thr-176, Asn-203, and Asn-224. Glu-68 lines the Mg(2+) pocket. Residue Glu-250 is part of the active site.

Belongs to the tubulin family. Dimer of alpha and beta chains. A typical microtubule is a hollow water-filled tube with an outer diameter of 25 nm and an inner diameter of 15 nM. Alpha-beta heterodimers associate head-to-tail to form protofilaments running lengthwise along the microtubule wall with the beta-tubulin subunit facing the microtubule plus end conferring a structural polarity. Microtubules usually have 13 protofilaments but different protofilament numbers can be found in some organisms and specialized cells. The cofactor is Mg(2+).

The protein resides in the cytoplasm. The protein localises to the cytoskeleton. It carries out the reaction GTP + H2O = GDP + phosphate + H(+). Tubulin is the major constituent of microtubules, a cylinder consisting of laterally associated linear protofilaments composed of alpha- and beta-tubulin heterodimers. Microtubules grow by the addition of GTP-tubulin dimers to the microtubule end, where a stabilizing cap forms. Below the cap, tubulin dimers are in GDP-bound state, owing to GTPase activity of alpha-tubulin. This is Tubulin alpha chain (TUB1) from Encephalitozoon cuniculi (strain GB-M1) (Microsporidian parasite).